Reading from the N-terminus, the 209-residue chain is Hyperpolarization-activated voltage-gated potassium channel (209 aa).

The Cytoplasmic portion of the chain corresponds to 1–10 (MNLKDRRLKK). The chain crosses the membrane as a helical span at residues 11–31 (IMEVLSLIFTFEIVASFILST). Over 32-38 (YNPPYQD) the chain is Extracellular. Residues 39–59 (LLIKLDYISIMFFTFEFIYNF) traverse the membrane as a helical segment. Topologically, residues 60 to 71 (YYVEDKAKFFKD) are cytoplasmic. The chain crosses the membrane as a helical span at residues 72–92 (IYNIVDAIVVIAFLLYSLQVF). At 93–96 (YSKA) the chain is on the extracellular side. A helical; Voltage-sensor transmembrane segment spans residues 97-117 (FLGLRVINLLRILVLLRIIKL). The Cytoplasmic segment spans residues 118-125 (RKLEENQA). Residues 126–146 (LINFLTLLTICFIASCLIWIV) traverse the membrane as a helical segment. The Extracellular portion of the chain corresponds to 147–181 (ESGVNPAINNFFDAFYFTTISITTVGYGDITPKTD). The short motif at 170 to 175 (TVGYGD) is the Selectivity filter element. The helical transmembrane segment at 182 to 202 (AGKLIIIFSVLFFISGLITSL) threads the bilayer. The Cytoplasmic portion of the chain corresponds to 203-209 (QKALKGD).

Belongs to the potassium channel family. As to quaternary structure, homotetramer.

It is found in the cell membrane. Functionally, voltage-gated potassium-selective channel opened by hyperpolarization. The polypeptide is Hyperpolarization-activated voltage-gated potassium channel (mvp) (Methanocaldococcus jannaschii (strain ATCC 43067 / DSM 2661 / JAL-1 / JCM 10045 / NBRC 100440) (Methanococcus jannaschii)).